The sequence spans 253 residues: uncharacterized protein (253 aa).

Positions 200 to 209 are enriched in basic and acidic residues; sequence TGREHAHKGP. Disordered regions lie at residues 200–225 and 234–253; these read TGRE…PNPA and QHSP…SAAT.

As to expression, most abundantly expressed in gastrointestinal tissues. Expressed at lower levels in kidney and placenta. Expressed in fetal brain, liver, placenta, kidney and lung.

This is an uncharacterized protein from Homo sapiens (Human).